We begin with the raw amino-acid sequence, 426 residues long: Serine--tRNA ligase (426 aa).

Residue 231-233 (TAE) coordinates L-serine. 262-264 (RSE) contributes to the ATP binding site. Glu285 contributes to the L-serine binding site. 349 to 352 (EISS) contacts ATP. Ser385 contacts L-serine.

Belongs to the class-II aminoacyl-tRNA synthetase family. Type-1 seryl-tRNA synthetase subfamily. In terms of assembly, homodimer. The tRNA molecule binds across the dimer.

The protein localises to the cytoplasm. The catalysed reaction is tRNA(Ser) + L-serine + ATP = L-seryl-tRNA(Ser) + AMP + diphosphate + H(+). It carries out the reaction tRNA(Sec) + L-serine + ATP = L-seryl-tRNA(Sec) + AMP + diphosphate + H(+). Its pathway is aminoacyl-tRNA biosynthesis; selenocysteinyl-tRNA(Sec) biosynthesis; L-seryl-tRNA(Sec) from L-serine and tRNA(Sec): step 1/1. In terms of biological role, catalyzes the attachment of serine to tRNA(Ser). Is also able to aminoacylate tRNA(Sec) with serine, to form the misacylated tRNA L-seryl-tRNA(Sec), which will be further converted into selenocysteinyl-tRNA(Sec). This Teredinibacter turnerae (strain ATCC 39867 / T7901) protein is Serine--tRNA ligase.